The primary structure comprises 70 residues: Putative membrane protein insertion efficiency factor (70 aa).

Belongs to the UPF0161 family.

It localises to the cell inner membrane. Functionally, could be involved in insertion of integral membrane proteins into the membrane. This Sphingopyxis alaskensis (strain DSM 13593 / LMG 18877 / RB2256) (Sphingomonas alaskensis) protein is Putative membrane protein insertion efficiency factor.